The chain runs to 417 residues: Secreted aspartic protease 4 (417 aa).

Positions 1–18 are cleaved as a signal peptide; that stretch reads MFLQNILSVLAFALLIDA. Residues 19 to 75 constitute a propeptide, activation peptide; that stretch reads APVKRSTGFVTLDFNVKRSLVDPKDPTVEVKRSPLFLDIEPTEIPVDDTGRNDVGKR. One can recognise a Peptidase A1 domain in the interval 89 to 403; that stretch reads YSADITIGSN…DLDDRKISMA (315 aa). D107 is an active-site residue. 107 to 109 provides a ligand contact to pepstatin A; the sequence is DTG. The cysteines at positions 122 and 134 are disulfide-linked. A glycan (N-linked (GlcNAc...) asparagine) is linked at N137. A pepstatin A-binding site is contributed by 160 to 161; it reads AD. D267 contacts Zn(2+). D293 is an active-site residue. Residue 293–297 participates in pepstatin A binding; the sequence is DSGTT. A disulfide bridge links C331 with C369.

Belongs to the peptidase A1 family. As to quaternary structure, monomer.

Its subcellular location is the secreted. The enzyme catalyses Preferential cleavage at the carboxyl of hydrophobic amino acids, but fails to cleave 15-Leu-|-Tyr-16, 16-Tyr-|-Leu-17 and 24-Phe-|-Phe-25 of insulin B chain. Activates trypsinogen, and degrades keratin.. Activity is inhibited by squash aspartic peptidase inhibitor (SQAPI). In terms of biological role, secreted aspartic peptidases (SAPs) are a group of ten acidic hydrolases considered as key virulence factors. These enzymes supply the fungus with nutrient amino acids as well as are able to degrade the selected host's proteins involved in the immune defense. Moreover, acts toward human hemoglobin though limited proteolysis to generate a variety of antimicrobial hemocidins, enabling to compete with the other microorganisms of the same physiological niche using the microbicidal peptides generated from the host protein. Functionally, plays a key role in defense against host by cleaving histatin-5 (Hst 5), a peptide from human saliva that carries out fungicidal activity. The cleavage rate decreases in an order of SAP2 &gt; SAP9 &gt; SAP3 &gt; SAP7 &gt; SAP4 &gt; SAP1 &gt; SAP8. The first cleavage occurs between residues 'Lys-17' and 'His-18' of Hst 5, giving DSHAKRHHGYKRKFHEK and HHSHRGY peptides. Simultaneously, the DSHAKRHHGY and KRKFHEKHHSHRGY peptides are also formed. This Candida albicans (strain SC5314 / ATCC MYA-2876) (Yeast) protein is Secreted aspartic protease 4.